Reading from the N-terminus, the 231-residue chain is Orotidine 5'-phosphate decarboxylase (231 aa).

Substrate-binding positions include D11, K33, 60–69 (DLKFHDIPNT), T117, R178, Q187, G207, and R208. K62 (proton donor) is an active-site residue.

Belongs to the OMP decarboxylase family. Type 1 subfamily. As to quaternary structure, homodimer.

It catalyses the reaction orotidine 5'-phosphate + H(+) = UMP + CO2. The protein operates within pyrimidine metabolism; UMP biosynthesis via de novo pathway; UMP from orotate: step 2/2. Catalyzes the decarboxylation of orotidine 5'-monophosphate (OMP) to uridine 5'-monophosphate (UMP). The chain is Orotidine 5'-phosphate decarboxylase from Nitrosomonas eutropha (strain DSM 101675 / C91 / Nm57).